The following is an 885-amino-acid chain: Sensor histidine kinase KdpD (885 aa).

Transmembrane regions (helical) follow at residues 384 to 404 (AIDM…GLWI), 415 to 435 (IILM…RSFI), 436 to 456 (IGFL…TEPR), and 464 to 484 (FDYP…SALL). Residues 660–880 (SISHDIRTPL…IFYFNIYTDF (221 aa)) form the Histidine kinase domain. At His-663 the chain carries Phosphohistidine; by autocatalysis.

It localises to the membrane. The catalysed reaction is ATP + protein L-histidine = ADP + protein N-phospho-L-histidine.. With respect to regulation, cyclic di-AMP is a negative regulator of the Kdp system. Member of the two-component regulatory system KdpD/KdpE that regulates the transcription of a series of virulence factors through sensing external K(+) concentrations. Also regulates capsular polysaccharide production. May function as a membrane-associated protein kinase that phosphorylates KdpE in response to environmental signals. In turn, KpdE functions as a transcriptional regulator by direct binding to promoter regions of target genes including spa, hla, aur and geh. In Staphylococcus aureus (strain NCTC 8325 / PS 47), this protein is Sensor histidine kinase KdpD.